We begin with the raw amino-acid sequence, 438 residues long: UPF0229 protein NGR_c12350 (438 aa).

Residues 1–16 (MPNFIDRRLNPKDKSL) show a composition bias toward basic and acidic residues. 2 disordered regions span residues 1–20 (MPNF…GNRQ) and 83–107 (FAAG…GTGQ). Over residues 94-105 (SGGGATGAGAGT) the composition is skewed to gly residues.

Belongs to the UPF0229 family.

This chain is UPF0229 protein NGR_c12350, found in Sinorhizobium fredii (strain NBRC 101917 / NGR234).